The chain runs to 464 residues: Siroheme synthase (464 aa).

Residues 1–203 (MEFLPLFHNL…GQGDEAERLL (203 aa)) are precorrin-2 dehydrogenase /sirohydrochlorin ferrochelatase. Residues 22-23 (EI) and 43-44 (PQ) each bind NAD(+). Phosphoserine is present on Ser128. The interval 216–464 (GEVYLVGAGP…KWFEGAQSQV (249 aa)) is uroporphyrinogen-III C-methyltransferase. Pro225 is a binding site for S-adenosyl-L-methionine. The active-site Proton acceptor is Asp248. Lys270 acts as the Proton donor in catalysis. S-adenosyl-L-methionine is bound by residues 301 to 303 (GGD), Ile306, 331 to 332 (TA), Met383, and Gly412.

In the N-terminal section; belongs to the precorrin-2 dehydrogenase / sirohydrochlorin ferrochelatase family. The protein in the C-terminal section; belongs to the precorrin methyltransferase family.

It carries out the reaction uroporphyrinogen III + 2 S-adenosyl-L-methionine = precorrin-2 + 2 S-adenosyl-L-homocysteine + H(+). It catalyses the reaction precorrin-2 + NAD(+) = sirohydrochlorin + NADH + 2 H(+). The catalysed reaction is siroheme + 2 H(+) = sirohydrochlorin + Fe(2+). Its pathway is cofactor biosynthesis; adenosylcobalamin biosynthesis; precorrin-2 from uroporphyrinogen III: step 1/1. The protein operates within cofactor biosynthesis; adenosylcobalamin biosynthesis; sirohydrochlorin from precorrin-2: step 1/1. It participates in porphyrin-containing compound metabolism; siroheme biosynthesis; precorrin-2 from uroporphyrinogen III: step 1/1. It functions in the pathway porphyrin-containing compound metabolism; siroheme biosynthesis; siroheme from sirohydrochlorin: step 1/1. Its pathway is porphyrin-containing compound metabolism; siroheme biosynthesis; sirohydrochlorin from precorrin-2: step 1/1. Its function is as follows. Multifunctional enzyme that catalyzes the SAM-dependent methylations of uroporphyrinogen III at position C-2 and C-7 to form precorrin-2 via precorrin-1. Then it catalyzes the NAD-dependent ring dehydrogenation of precorrin-2 to yield sirohydrochlorin. Finally, it catalyzes the ferrochelation of sirohydrochlorin to yield siroheme. This chain is Siroheme synthase, found in Pseudomonas fluorescens (strain SBW25).